A 307-amino-acid polypeptide reads, in one-letter code: Small ribosomal subunit protein uS3 (307 aa).

The 70-residue stretch at 17-86 folds into the KH type-2 domain; the sequence is MDEYFAEQLN…NPQIDAQEVK (70 aa). Over residues 201–226 the composition is skewed to basic and acidic residues; that stretch reads IEEPAEKPAEKQVEKPAVAPKKEAAK. Residues 201 to 265 are disordered; the sequence is IEEPAEKPAE…QVEASEDFEE (65 aa). Residues 240 to 265 are compositionally biased toward acidic residues; that stretch reads PTEEPEVAEPEEAEEAQVEASEDFEE.

This sequence belongs to the universal ribosomal protein uS3 family. As to quaternary structure, part of the 30S ribosomal subunit.

Binds the lower part of the 30S subunit head. This chain is Small ribosomal subunit protein uS3, found in Methanosarcina mazei (strain ATCC BAA-159 / DSM 3647 / Goe1 / Go1 / JCM 11833 / OCM 88) (Methanosarcina frisia).